The chain runs to 233 residues: Maternal B9.15 protein (233 aa).

A disordered region spans residues 135 to 165 (KATSDYHSGTSSDEEPTNKEPKTIPKVSNPN).

The protein belongs to the BTG family.

This chain is Maternal B9.15 protein, found in Xenopus laevis (African clawed frog).